The chain runs to 302 residues: MRSSIHASRLRKMGQSIPASTGPMARSANRFLQNRAAIFGLVLLTPLLFAVLTYPLWLPYKPNDIDLMAMNSAPSWKHWFGADGVGRDVFARTMEGGRISLLVAVSSVVLSTAIGFLIGAISALGGRWADAIAMRSVDLAMTLPPVIFLLVLASIIGSGIWSTVVVIALLSWPVLSRMIRARLLELREREFVMASRGMGAGLGHLLFRHGLPNSIDILVVYATLQVANAILLEAGLSFLGLGVPPPAASWGNMLNAARSTAVLEQFPWQWLFPGGALVLAVLAINFIGDGLRDAFDPRAELN.

The segment at 1–22 (MRSSIHASRLRKMGQSIPASTG) is disordered. 6 helical membrane-spanning segments follow: residues 38-58 (IFGL…PLWL), 101-121 (LLVA…IGAI), 147-167 (IFLL…VVVI), 200-222 (AGLG…VVYA), 230-250 (ILLE…AASW), and 268-288 (WQWL…NFIG). Residues 97–288 (GRISLLVAVS…LAVLAINFIG (192 aa)) form the ABC transmembrane type-1 domain.

The protein belongs to the binding-protein-dependent transport system permease family. The complex is composed of two ATP-binding proteins (BOV_A0347 and BOV_A0348), two transmembrane proteins (BOV_A0350 and BOV_A0351) and a solute-binding protein (BOV_A0352).

Its subcellular location is the cell inner membrane. Its function is as follows. Probably part of an ABC transporter complex that could be involved in peptide import. Probably responsible for the translocation of the substrate across the membrane. In Brucella ovis (strain ATCC 25840 / 63/290 / NCTC 10512), this protein is Putative peptide permease protein BOV_A0350.